The sequence spans 557 residues: Carotenoid-cleaving dioxygenase, mitochondrial (557 aa).

Fe cation is bound by residues H203, H263, H334, and H551.

The protein belongs to the carotenoid oxygenase family. Requires Fe(2+) as cofactor.

The protein resides in the mitochondrion. It carries out the reaction all-trans-beta-carotene + O2 = beta-ionone + all-trans-10'-apo-beta-carotenal. The catalysed reaction is 5-cis-lycopene + O2 = 5-cis-10'-apo-lycopenal + (3E,5E)-6,10-dimethylundeca-3,5,9-trien-2-one. The enzyme catalyses 13-cis-lycopene + O2 = 13-cis-10'-apo-lycopenal + (3E,5E)-6,10-dimethylundeca-3,5,9-trien-2-one. It catalyses the reaction lutein + O2 = (3R,6R)-hydroxy-alpha-ionone + (3R)-3-hydroxy-10'-apo-beta-carotenal. It carries out the reaction lutein + O2 = (3R,6R)-3-hydroxy-10'-apo-alpha-carotenal + (3R)-hydroxy-beta-ionone. The catalysed reaction is all-trans-zeaxanthin + 2 O2 = 4,9-dimethyldodeca-2,4,6,8,10-pentaenedial + 2 (3R)-hydroxy-beta-ionone. The enzyme catalyses all-trans-zeaxanthin + O2 = (3R)-3-hydroxy-10'-apo-beta-carotenal + (3R)-hydroxy-beta-ionone. It catalyses the reaction beta-cryptoxanthin + O2 = all-trans-10'-apo-beta-carotenal + (3R)-hydroxy-beta-ionone. It carries out the reaction all-trans-10'-apo-beta-carotenal + O2 = beta-ionone + 4,9-dimethyldodeca-2,4,6,8,10-pentaenedial. The catalysed reaction is (3R)-3-hydroxy-10'-apo-beta-carotenal + O2 = 4,9-dimethyldodeca-2,4,6,8,10-pentaenedial + (3R)-hydroxy-beta-ionone. The enzyme catalyses (3R,6R)-3-hydroxy-10'-apo-alpha-carotenal + O2 = (3R,6R)-hydroxy-alpha-ionone + 4,9-dimethyldodeca-2,4,6,8,10-pentaenedial. Its function is as follows. Broad specificity mitochondrial dioxygenase that mediates the asymmetric oxidative cleavage of carotenoids. Cleaves carotenes (pure hydrocarbon carotenoids) such as all-trans-beta-carotene and lycopene as well as xanthophylls (oxygenated carotenoids) such as zeaxanthin, lutein and beta-cryptoxanthin at both the 9,10 and the 9',10' carbon-carbon double bond. Through its function in carotenoids metabolism regulates oxidative stress and the production of important signaling molecules. This Pongo abelii (Sumatran orangutan) protein is Carotenoid-cleaving dioxygenase, mitochondrial.